Reading from the N-terminus, the 364-residue chain is Dual-specificity RNA methyltransferase RlmN (364 aa).

The Proton acceptor role is filled by Glu-91. In terms of domain architecture, Radical SAM core spans 97-333; the sequence is EDDRGTLCVS…VTVRKTRGDD (237 aa). An intrachain disulfide couples Cys-104 to Cys-338. The [4Fe-4S] cluster site is built by Cys-111, Cys-115, and Cys-118. Residues 164 to 165, Ser-196, 218 to 220, and Asn-295 each bind S-adenosyl-L-methionine; these read GE and SLH. Catalysis depends on Cys-338, which acts as the S-methylcysteine intermediate.

Belongs to the radical SAM superfamily. RlmN family. [4Fe-4S] cluster serves as cofactor.

Its subcellular location is the cytoplasm. It carries out the reaction adenosine(2503) in 23S rRNA + 2 reduced [2Fe-2S]-[ferredoxin] + 2 S-adenosyl-L-methionine = 2-methyladenosine(2503) in 23S rRNA + 5'-deoxyadenosine + L-methionine + 2 oxidized [2Fe-2S]-[ferredoxin] + S-adenosyl-L-homocysteine. The catalysed reaction is adenosine(37) in tRNA + 2 reduced [2Fe-2S]-[ferredoxin] + 2 S-adenosyl-L-methionine = 2-methyladenosine(37) in tRNA + 5'-deoxyadenosine + L-methionine + 2 oxidized [2Fe-2S]-[ferredoxin] + S-adenosyl-L-homocysteine. Specifically methylates position 2 of adenine 2503 in 23S rRNA and position 2 of adenine 37 in tRNAs. m2A2503 modification seems to play a crucial role in the proofreading step occurring at the peptidyl transferase center and thus would serve to optimize ribosomal fidelity. The chain is Dual-specificity RNA methyltransferase RlmN from Chromobacterium violaceum (strain ATCC 12472 / DSM 30191 / JCM 1249 / CCUG 213 / NBRC 12614 / NCIMB 9131 / NCTC 9757 / MK).